The sequence spans 1403 residues: MAEHGESSEDRISEIDYEFLAELSARFGMNLVQLAKSQEEEDHKERMKMKKGFNSQMRSEAKRLKTFESYDTFRSWTPQEMAAAGFYHTGVKLGVQCFCCSLILFGNSLRKLPIERHKKLRPECEFLQGKDVGNIGKYDIRVKSPEKMLRGGKARYHEEEARLESFEDWPFYAHGTSPRALSAAGFVFTGKRDTVQCFSCGGSLGNWEEGDDPWKEHAKWFPKCEFLQSKKSSEEIAQYIQDYEGFVHVTGEHFVKSWVRRELPMVSAYCNDSVFTNEELRMDMFKDWPQESPVGFEALVRAGFFYTGKKDIVRCFSCGGCLEKWAEGDDPMEDHIKFFPECVFLQTLKSSAEVIPTLQSQYALPEATETTRESNHDDAAAVHSTVVDLGRSEAQWFQEARSLSEQLRDTYTKTSFCHMNLPEVCSSLGTDHLLGCDVSIISKHVSQPVQGALTIPEVFSNLSSVMCVEGEAGSGKTTFLKRIAFLWASGCCPLLYRFQLVFYLSLSSITPDQGLANIICTQLLGAGGCISEVCLSSSIQQLQHQVLFLLDDYSGLASLPQALHTLITKNYLFRTCLLIAVHTNRVRDIRPYLGTSLEIQEFPFYNTVFVLRKFFSHDIICVEKLIIYFSENKDLQGVYKTPLFVAAVCNDWNQNASAQDDFQDVTLFHSYMQYLSLKYKATAESLQATVSSCGQLALTGLFSSCFEFNSDDLAEAGVDEDVKLTTFLMSKFTAQRLRPVYRFLGPLFQEFLAAVRLTELLSSDRQEDQDLGLYYLRQIDSPLKAINSFNIFLYYVSSHSSSKAAPTVVSHLLQLVDEKESLENMSENEDYMKLHPQTFLWFQFVRGLWLVSPESFSSFVSEHLLRLALIFAYESNTVAECSPFILQFLRGRTLALRVLNLEYFWDHPESLLLLRSLKVSINGNKMSSYVDYSFKTYFENLQPPAINEEYTSAFEHVSEWRRNFAQDEEIIKNYENIWPRALPDISEGYWNLSPKPCKIPKLEVQVNNMGPADQALLQVLMEVFSASQSIEFHLFNSSGFLESIRPALELSKASVTKCSMSRLELSRAEQELLLTLPALQSLEVSETNQLPDQLFHNLHKFLGLKELCVRLDGKPDVLSVLPEEFLNLHHMEKLSIRTSTESDLSKLVKFIQNFPNLHVFHLKCDFLSNCESLMTALASCKKLREIEFSGQCFEAMTFVNILPNFVSLKILSLKGQQFADKETSEKFAQALGSLRNLEELLVPTGDGIHQVAKLIVRQCLQLPCLRVLAFHDILDDESVIEIARAATSGSFQKLENLDISMNHKITEEGYRNFFQALDNLPNLQMLNICRNIPGRIQVQATTVKALGHCVSRLPSLTRLGMLSWLLDEEDMKVINDVKERHPQSKRLTIFWKWIVPFSPVVLE.

BIR repeat units follow at residues 60–127, 159–227, and 278–345; these read EAKR…CEFL, EEAR…CEFL, and EELR…CVFL. Zn(2+) is bound by residues Cys315, Cys318, His335, and Cys342. Residues 464–759 form the NACHT domain; the sequence is SVMCVEGEAG…EFLAAVRLTE (296 aa). 473-478 is an ATP binding site; it reads GSGKTT.

In terms of assembly, component of the NLRC4 inflammasome, at least composed of NLRC4, caspase-1 (CASP1) and some NAIP protein. (Microbial infection) Interacts with S.typhimurium (Salmonella) flagellin.

Functionally, sensor component of the NLRC4 inflammasome that specifically recognizes and binds flagellin from pathogenic bacteria. Association of pathogenic bacteria proteins drives in turn drive assembly and activation of the NLRC4 inflammasome, promoting caspase-1 activation, cytokine production and macrophage pyroptosis. The NLRC4 inflammasome is activated as part of the innate immune response to a range of intracellular bacteria. The NLRC4 inflammasome senses Gram-negative bacteria such as L.pneumophila and P.aeruginosa, enteric pathogens S.typhimurium (Salmonella) and S.flexneri. May contribute to prevent motor-neuron apoptosis induced by a variety of signals. The sequence is that of Baculoviral IAP repeat-containing protein 1f (Naip6) from Mus musculus (Mouse).